Here is a 287-residue protein sequence, read N- to C-terminus: X-box-binding protein 1 (287 aa).

One can recognise a bZIP domain in the interval 61 to 117 (EEKMDRRKLKNRVAAQNARDKKKERSAKIEDVMRDLVEENRRLRAENERLRRQNKNL). The interval 63 to 87 (KMDRRKLKNRVAAQNARDKKKERSA) is disordered. The interval 63-88 (KMDRRKLKNRVAAQNARDKKKERSAK) is basic motif. The span at 78-87 (ARDKKKERSA) shows a compositional bias: basic and acidic residues. The tract at residues 89-117 (IEDVMRDLVEENRRLRAENERLRRQNKNL) is leucine-zipper.

In terms of assembly, interacts with SUMO-conjugating enzyme ubc-9; the interaction is direct. Post-translationally, sumoylated. Sumoylation may negatively modulate the transcription of genes involved in the ER-stress-response.

Its subcellular location is the nucleus. Required for transcriptional regulation of the unfolded protein response (UPR) in the endoplasmic reticulum (ER) under stressed conditions, acting downstream of ire-1, and also maintaining ER homeostasis via a negative feedback loop, in parallel with ER kinase pek-1. May also regulate Golgi protein trafficking distal to the ER. Protects the host organism from the detrimental effects of mounting an innate immune response to microbes, such as the Gram-negative bacterium P.aeruginosa, probably by modulating the UPR. In terms of biological role, plays a role in the unconventional cytoplasmic splicing processing of its own mRNA triggered by the endoplasmic reticulum (ER) transmembrane endoribonuclease ire-1: upon ER stress, the emerging xbp-1 polypeptide chain, as part of a mRNA-ribosome-nascent chain (R-RNC) complex, cotranslationally recruits its own unprocessed mRNA through transient docking to the ER membrane and translational pausing, therefore facilitating efficient ire-1-mediated xbp-1 mRNA isoform 2 production. Functionally, functions as a stress-inducible potent transcriptional activator during endoplasmic reticulum (ER) stress by inducing unfolded protein response (UPR) target genes via binding to the UPR element (UPRE). Plays a role in modulation of the UPR, lipid metabolism, proteostasis, and lifespan. In neurons, rescues stress resistance, increases longevity, and, drives expression of lysosomal genes in the intestine and activates the UPR in distal, non-neuronal cell types through a cell-nonautonomous mechanism. In neurons or intestine, plays a role in protection against proteotoxicity, acting via positive modulation of genes involved in lysosomal function, including lipases and the fatty-acid desaturase fat-6. Protection against proteotoxicity in neurons is dependent upon the transcription factor atf-6. The chain is X-box-binding protein 1 from Caenorhabditis elegans.